The following is a 504-amino-acid chain: Sperm motility kinase 2A (504 aa).

Residues Tyr28 to Val276 enclose the Protein kinase domain. ATP-binding positions include Ile34–Val42 and Lys57. The active-site Proton acceptor is the Asp147. Positions Lys294 to Lys334 constitute a UBA domain. Composition is skewed to polar residues over residues Pro376–Ser393 and Ser443–Ser454. Disordered regions lie at residues Pro376 to Ser403 and Ser443 to Ile469.

The protein belongs to the protein kinase superfamily. CAMK Ser/Thr protein kinase family. Smok subfamily. As to expression, testis-specific. Expressed in the testis from 22 days postpartum (22 dpp).

The enzyme catalyses L-seryl-[protein] + ATP = O-phospho-L-seryl-[protein] + ADP + H(+). It catalyses the reaction L-threonyl-[protein] + ATP = O-phospho-L-threonyl-[protein] + ADP + H(+). In terms of biological role, may play a role in sperm motility, especially in the regulation of flagellar function. The polypeptide is Sperm motility kinase 2A (Smok2a) (Mus musculus (Mouse)).